The following is a 250-amino-acid chain: MELLLFVMSLILLTFSKAMPLFDHNSFYFEKLDDCIAAVINCTRSEVPLLLEPIYQPPVYNEDVMSILLKPPTKKKPFSRIMVTNEFLSDFLLLQDNPEQLRTLFALIGDPESRDNWLNFFNGFQTCSPSVGITTCISDNCRKYLPERITYVNNFFVDNIAGLEFNISENTDSFYSNIGFLLYLENPATGITKIIRFPFNSLTLFDTILNCLKYFHLKTGVEFDLLKQMEAYNSKLPFRSSRPTILIRNT.

The signal sequence occupies residues 1–18 (MELLLFVMSLILLTFSKA). In terms of domain architecture, gL betaherpesvirus-type spans 31 to 239 (KLDDCIAAVI…EAYNSKLPFR (209 aa)). The cysteines at positions 136 and 141 are disulfide-linked.

The protein belongs to the herpesviridae glycoprotein L (gL) family. Betaherpesvirinae gL subfamily. In terms of assembly, interacts with glycoprotein H (gH); this interaction is necessary for the correct processing and cell surface expression of gH. Part of a gH-gL-gO complex.

The protein localises to the virion membrane. The protein resides in the host cell membrane. Its subcellular location is the host Golgi apparatus. It localises to the host trans-Golgi network. The heterodimer glycoprotein H-glycoprotein L is required for the fusion of viral and plasma membranes leading to virus entry into the host cell. Acts as a functional inhibitor of gH and maintains gH in an inhibited form. Upon binding to host integrins, gL dissociates from gH leading to activation of the viral fusion glycoproteins gB and gH. This Homo sapiens (Human) protein is Envelope glycoprotein L.